The following is a 231-amino-acid chain: MSNFDSEHPRVLIPELCKLFYGNGWVTGTGGGISIKRDKEIYIAASGVQKERILGEDIFVMDENENEISTPPTEKKLKASQCTPLFFNAYKYRDAGAVIHTHSQHAVMVTLLYQTEFIITHQEMIKGILSGHGENAKYLQYFDRLVIPIIENTPHERDLKERMHKAMEKYPNANAVLVRRHGVYVWGPDWVKAKTMCECFDYLFEIAIKMKQMGLDPTEVPHANEECCYDC.

A substrate-binding site is contributed by cysteine 82. Residues histidine 100 and histidine 102 each contribute to the Zn(2+) site. The Proton donor/acceptor role is filled by glutamate 123. Residue histidine 181 participates in Zn(2+) binding.

The protein belongs to the aldolase class II family. MtnB subfamily. It depends on Zn(2+) as a cofactor.

The protein resides in the cytoplasm. It carries out the reaction 5-(methylsulfanyl)-D-ribulose 1-phosphate = 5-methylsulfanyl-2,3-dioxopentyl phosphate + H2O. It functions in the pathway amino-acid biosynthesis; L-methionine biosynthesis via salvage pathway; L-methionine from S-methyl-5-thio-alpha-D-ribose 1-phosphate: step 2/6. Functionally, catalyzes the dehydration of methylthioribulose-1-phosphate (MTRu-1-P) into 2,3-diketo-5-methylthiopentyl-1-phosphate (DK-MTP-1-P). This Dictyostelium discoideum (Social amoeba) protein is Probable methylthioribulose-1-phosphate dehydratase.